Here is a 641-residue protein sequence, read N- to C-terminus: MTQSVHAETHGFQTEVKQLLSLMAHSLYSNKEVFLRELISNASDAADKLRFKALSDASLFENDGQLRVRLVVDKENRTLTISDNGIGMTRDQVIEHLGTIAKSGTAEFFKNLSGDQGRDSQLIGQFGVGFYSAFIVADKVTVVSRAAGTAPEQGVQWESEGEGSFTVADVTKAGRGTDVILHLRAEEDEFLDDWRLRSVVSKYSDHISVPVEMYKEGTPDSVGEGEEDGETIVGTPGEWEQVNRATALWTRNPKEIKDEEYQEFYKHVAHDFEDPLLWGHNRVEGAQEYTSLLYVPARAPFDLYNRDQKHGLKLYVQRVFIMDDAEQFMPAYLRFVKGVLDSNDLPLNVSREILQDNKVTVSLRKACSKRVLTMLAKLAKDDAEKYAKFWSEFGNVLKEGPAEDYANREEIAKLLRFASTAGEGEAQTVSLEDYVGRMKEGQQKIYYITADSYAAAKNSPHLEIFRKKGVEVLLMWERVDEWLMSHLTEFDGKQLVSVTRGELDLGDLEDEASKQAQEEAEKANAGLVERVKQSLGEAVKEVRVTHRLTDSPSCIVTDAHGMSTQMIKLMRAAGQPVPEQKYILELNPDHALVKKLGAIEDEALFGEWVTLLHEQAQLAEQGGLNDPASFVSRINRLLLQA.

Residues 1 to 351 (MTQSVHAETH…SNDLPLNVSR (351 aa)) are a; substrate-binding. Residues 352–568 (EILQDNKVTV…AHGMSTQMIK (217 aa)) form a b region. Residues 569–641 (LMRAAGQPVP…SRINRLLLQA (73 aa)) form a c region.

This sequence belongs to the heat shock protein 90 family. Homodimer.

The protein resides in the cytoplasm. In terms of biological role, molecular chaperone. Has ATPase activity. This chain is Chaperone protein HtpG, found in Aeromonas hydrophila subsp. hydrophila (strain ATCC 7966 / DSM 30187 / BCRC 13018 / CCUG 14551 / JCM 1027 / KCTC 2358 / NCIMB 9240 / NCTC 8049).